A 69-amino-acid chain; its full sequence is Putative membrane protein insertion efficiency factor (69 aa).

Belongs to the UPF0161 family.

It is found in the cell membrane. In terms of biological role, could be involved in insertion of integral membrane proteins into the membrane. This Clostridium botulinum (strain Kyoto / Type A2) protein is Putative membrane protein insertion efficiency factor.